The following is a 66-amino-acid chain: UPF0337 protein BA_0987/GBAA_0987/BAS0923 (66 aa).

The segment at 1 to 22 (MSESGLKEQITGKVEKTKGQVK) is disordered. The segment covering 13–22 (KVEKTKGQVK) has biased composition (basic and acidic residues).

This sequence belongs to the UPF0337 (CsbD) family.

The sequence is that of UPF0337 protein BA_0987/GBAA_0987/BAS0923 from Bacillus anthracis.